The sequence spans 23 residues: Potassium channel toxin alpha-KTx 13.4 (23 aa).

Intrachain disulfides connect cysteine 2/cysteine 15, cysteine 5/cysteine 20, and cysteine 9/cysteine 22. The segment at 13 to 20 (GKCINGKC) is interaction with Ca(2+)-activated K(+) channels. Tyrosine 23 carries the tyrosine amide modification.

In terms of tissue distribution, expressed by the venom gland.

It is found in the secreted. In terms of biological role, blocks the potassium channel Shaker B. The chain is Potassium channel toxin alpha-KTx 13.4 from Tityus stigmurus (Brazilian scorpion).